Here is a 944-residue protein sequence, read N- to C-terminus: 2-oxoglutarate dehydrogenase E1 component (944 aa).

Residues 914–944 are disordered; sequence RRRRSSPAEGDPTVHKKEQERIVSDSLTRKN. A compositionally biased stretch (basic and acidic residues) spans 925–936; the sequence is PTVHKKEQERIV.

Belongs to the alpha-ketoglutarate dehydrogenase family. In terms of assembly, homodimer. Part of the 2-oxoglutarate dehydrogenase (OGDH) complex composed of E1 (2-oxoglutarate dehydrogenase), E2 (dihydrolipoamide succinyltransferase) and E3 (dihydrolipoamide dehydrogenase); the complex contains multiple copies of the three enzymatic components (E1, E2 and E3). The cofactor is thiamine diphosphate.

The enzyme catalyses N(6)-[(R)-lipoyl]-L-lysyl-[protein] + 2-oxoglutarate + H(+) = N(6)-[(R)-S(8)-succinyldihydrolipoyl]-L-lysyl-[protein] + CO2. Functionally, E1 component of the 2-oxoglutarate dehydrogenase (OGDH) complex which catalyzes the decarboxylation of 2-oxoglutarate, the first step in the conversion of 2-oxoglutarate to succinyl-CoA and CO(2). The protein is 2-oxoglutarate dehydrogenase E1 component of Bacillus licheniformis (strain ATCC 14580 / DSM 13 / JCM 2505 / CCUG 7422 / NBRC 12200 / NCIMB 9375 / NCTC 10341 / NRRL NRS-1264 / Gibson 46).